The primary structure comprises 205 residues: Small ribosomal subunit protein uS4 (205 aa).

Positions 95–163 constitute an S4 RNA-binding domain; that stretch reads RRLDNVVYRL…FKENLESRDP (69 aa).

The protein belongs to the universal ribosomal protein uS4 family. Part of the 30S ribosomal subunit. Contacts protein S5. The interaction surface between S4 and S5 is involved in control of translational fidelity.

One of the primary rRNA binding proteins, it binds directly to 16S rRNA where it nucleates assembly of the body of the 30S subunit. In terms of biological role, with S5 and S12 plays an important role in translational accuracy. The sequence is that of Small ribosomal subunit protein uS4 from Persephonella marina (strain DSM 14350 / EX-H1).